A 66-amino-acid polypeptide reads, in one-letter code: Venom protein 27.1 (66 aa).

Residues Met-1–Ala-22 form the signal peptide.

Post-translationally, contains 1 disulfide bond. Expressed by the venom gland.

It is found in the secreted. This is Venom protein 27.1 from Lychas mucronatus (Chinese swimming scorpion).